The chain runs to 611 residues: Chaperone protein DnaK (611 aa).

Position 173 is a phosphothreonine; by autocatalysis (Thr-173). Disordered regions lie at residues 525–548 and 573–611; these read DNIS…ALEG and YQQA…EDKK. A compositionally biased stretch (basic and acidic residues) spans 529–542; sequence EEDKSNAESKKDAL. Low complexity predominate over residues 574-591; that stretch reads QQAQQAQQQAQDGAQQTQ. The segment covering 599 to 611 has biased composition (basic and acidic residues); the sequence is AEFKEVNDDEDKK.

This sequence belongs to the heat shock protein 70 family.

In terms of biological role, acts as a chaperone. This is Chaperone protein DnaK from Staphylococcus haemolyticus (strain JCSC1435).